A 125-amino-acid polypeptide reads, in one-letter code: Large ribosomal subunit protein eL31 (125 aa).

At Met-1 the chain carries N-acetylmethionine. A Phosphoserine modification is found at Ser-15. An N6-succinyllysine mark is found at Lys-55 and Lys-70. Residue Lys-75 is modified to N6-acetyllysine; alternate. Residue Lys-75 is modified to N6-succinyllysine; alternate. Ser-98 carries the post-translational modification Phosphoserine.

It belongs to the eukaryotic ribosomal protein eL31 family. Component of the large ribosomal subunit.

Its subcellular location is the cytoplasm. Component of the large ribosomal subunit. The ribosome is a large ribonucleoprotein complex responsible for the synthesis of proteins in the cell. The chain is Large ribosomal subunit protein eL31 (RPL31) from Oryctolagus cuniculus (Rabbit).